Consider the following 107-residue polypeptide: Large ribosomal subunit protein uL24 (107 aa).

It belongs to the universal ribosomal protein uL24 family. In terms of assembly, part of the 50S ribosomal subunit.

Its function is as follows. One of two assembly initiator proteins, it binds directly to the 5'-end of the 23S rRNA, where it nucleates assembly of the 50S subunit. One of the proteins that surrounds the polypeptide exit tunnel on the outside of the subunit. The chain is Large ribosomal subunit protein uL24 from Malacoplasma penetrans (strain HF-2) (Mycoplasma penetrans).